Consider the following 429-residue polypeptide: Serine hydroxymethyltransferase (429 aa).

Residues Leu125 and Gly129–Leu131 contribute to the (6S)-5,6,7,8-tetrahydrofolate site. The residue at position 234 (Lys234) is an N6-(pyridoxal phosphate)lysine.

The protein belongs to the SHMT family. As to quaternary structure, homodimer. Pyridoxal 5'-phosphate is required as a cofactor.

Its subcellular location is the cytoplasm. The catalysed reaction is (6R)-5,10-methylene-5,6,7,8-tetrahydrofolate + glycine + H2O = (6S)-5,6,7,8-tetrahydrofolate + L-serine. It functions in the pathway one-carbon metabolism; tetrahydrofolate interconversion. It participates in amino-acid biosynthesis; glycine biosynthesis; glycine from L-serine: step 1/1. In terms of biological role, catalyzes the reversible interconversion of serine and glycine with tetrahydrofolate (THF) serving as the one-carbon carrier. This reaction serves as the major source of one-carbon groups required for the biosynthesis of purines, thymidylate, methionine, and other important biomolecules. Also exhibits THF-independent aldolase activity toward beta-hydroxyamino acids, producing glycine and aldehydes, via a retro-aldol mechanism. The chain is Serine hydroxymethyltransferase from Allorhizobium ampelinum (strain ATCC BAA-846 / DSM 112012 / S4) (Agrobacterium vitis (strain S4)).